The primary structure comprises 365 residues: Leu/Ile/Val/Thr-binding protein (365 aa).

Positions M1–A21 are cleaved as a signal peptide. C74 and C99 form a disulfide bridge.

The protein belongs to the leucine-binding protein family.

It is found in the periplasm. In terms of biological role, this protein is a component of the leucine, isoleucine, valine, threonine transport system, which is one of the two periplasmic binding protein-dependent transport systems of the high-affinity transport of the branched-chain amino acids. The chain is Leu/Ile/Val/Thr-binding protein (livJ) from Salmonella typhimurium (strain LT2 / SGSC1412 / ATCC 700720).